The following is a 450-amino-acid chain: Carbamoyl phosphate synthase arginine-specific small chain (450 aa).

A mitochondrion-targeting transit peptide spans 1–29; the sequence is MFAARLFKAMPARASAFPSVNASIQSRFM. In terms of domain architecture, Glutamine amidotransferase type-1 spans 220–407; sequence HVAVIDCGVK…LDSVRKYKAS (188 aa). Cysteine 296 functions as the Nucleophile in the catalytic mechanism. Residues histidine 380 and glutamate 382 contribute to the active site.

Belongs to the CarA family. In terms of assembly, heterodimer composed of 2 chains; the small (or glutamine) chain promotes the hydrolysis of glutamine to ammonia, which is used by the large (or ammonia) chain to synthesize carbamoyl phosphate.

It localises to the mitochondrion matrix. It carries out the reaction hydrogencarbonate + L-glutamine + 2 ATP + H2O = carbamoyl phosphate + L-glutamate + 2 ADP + phosphate + 2 H(+). The catalysed reaction is L-glutamine + H2O = L-glutamate + NH4(+). It functions in the pathway amino-acid biosynthesis; L-arginine biosynthesis; carbamoyl phosphate from bicarbonate: step 1/1. Small subunit of the arginine-specific carbamoyl phosphate synthase (CPSase). CPSase catalyzes the formation of carbamoyl phosphate from the ammonia moiety of glutamine, carbonate, and phosphate donated by ATP, the first step of the arginine biosynthetic pathway. The small subunit (glutamine amidotransferase) binds and cleaves glutamine to supply the large subunit with the substrate ammonia. In Aspergillus oryzae (strain ATCC 42149 / RIB 40) (Yellow koji mold), this protein is Carbamoyl phosphate synthase arginine-specific small chain (cpa1).